A 488-amino-acid chain; its full sequence is NADH-quinone oxidoreductase subunit N (488 aa).

Helical transmembrane passes span 15–35 (LALP…VDLY), 42–62 (GMTF…AIVA), 79–99 (NLAA…FAYC), 108–128 (LLKG…MIMA), 133–153 (LMTV…MVAF), 168–188 (FVLG…IYGA), 209–229 (WLLL…FGAV), 243–263 (PTTV…ALFV), 277–297 (WQPM…LAAL), 305–325 (MLAY…IAGT), 333–353 (LFYA…IILL), 376–396 (MALM…TVGF), 409–429 (VGLV…AFYY), and 456–476 (GLLV…DSLI).

This sequence belongs to the complex I subunit 2 family. In terms of assembly, NDH-1 is composed of 14 different subunits. Subunits NuoA, H, J, K, L, M, N constitute the membrane sector of the complex.

The protein localises to the cell inner membrane. It catalyses the reaction a quinone + NADH + 5 H(+)(in) = a quinol + NAD(+) + 4 H(+)(out). Its function is as follows. NDH-1 shuttles electrons from NADH, via FMN and iron-sulfur (Fe-S) centers, to quinones in the respiratory chain. The immediate electron acceptor for the enzyme in this species is believed to be ubiquinone. Couples the redox reaction to proton translocation (for every two electrons transferred, four hydrogen ions are translocated across the cytoplasmic membrane), and thus conserves the redox energy in a proton gradient. The chain is NADH-quinone oxidoreductase subunit N from Alkalilimnicola ehrlichii (strain ATCC BAA-1101 / DSM 17681 / MLHE-1).